A 509-amino-acid polypeptide reads, in one-letter code: Leucine-rich repeat-containing protein 14 (509 aa).

One copy of the LRR 1; degenerate repeat lies at 111–146 (RQRLRLLDMTGMQEEGLEQNPDTMSLWSRTVTLAKA). An LRR 2; degenerate repeat occupies 210–234 (RLQCRDFRAEELSLRSTAGLLELLN). The stretch at 235–262 (PGSVRQIDLRFNNLGLSGLNVLLPHMAK) is one LRR 3; degenerate repeat. Residues 263 to 298 (FSHLQSLKLPYSNVDVRRLSPVMEEGLQSFASQLGQ) form an LRR 4; degenerate repeat. LRR repeat units follow at residues 299 to 323 (LGAL…LGGL), 324 to 355 (QRPL…SSLR), 356 to 374 (KLDL…PFLH), 380 to 407 (SGHL…ILCR), and 408 to 432 (CSWL…VLQN).

This sequence belongs to the PRAME family. LRRC14 subfamily.

The protein resides in the cytoplasm. This Xenopus laevis (African clawed frog) protein is Leucine-rich repeat-containing protein 14.